The following is a 306-amino-acid chain: Bifunctional protein FolD (306 aa).

Residues 164–166 (GRS), serine 189, and threonine 230 each bind NADP(+).

This sequence belongs to the tetrahydrofolate dehydrogenase/cyclohydrolase family. In terms of assembly, homodimer.

The catalysed reaction is (6R)-5,10-methylene-5,6,7,8-tetrahydrofolate + NADP(+) = (6R)-5,10-methenyltetrahydrofolate + NADPH. It carries out the reaction (6R)-5,10-methenyltetrahydrofolate + H2O = (6R)-10-formyltetrahydrofolate + H(+). It functions in the pathway one-carbon metabolism; tetrahydrofolate interconversion. In terms of biological role, catalyzes the oxidation of 5,10-methylenetetrahydrofolate to 5,10-methenyltetrahydrofolate and then the hydrolysis of 5,10-methenyltetrahydrofolate to 10-formyltetrahydrofolate. This Solibacter usitatus (strain Ellin6076) protein is Bifunctional protein FolD.